Reading from the N-terminus, the 791-residue chain is Nuclear cap-binding protein subunit 1 (791 aa).

Positions 1 to 14 (MSRRRHSDENDGGP) are enriched in basic and acidic residues. The interval 1–24 (MSRRRHSDENDGGPHHKRRKTSEP) is disordered. An MIF4G domain is found at 28 to 240 (EDRLESLICR…CLWAQIQKLK (213 aa)). Residues 641–714 (LHSTIRKMNK…SEQKNLFLVI (74 aa)) adopt a coiled-coil conformation. The disordered stretch occupies residues 668 to 687 (KQHKHRDSDDNDEDSGRKDG).

This sequence belongs to the NCBP1 family. In terms of assembly, component of the nuclear cap-binding complex (CBC), a heterodimer composed of ncbp1/cbp80 and ncbp2/cbp20 that interacts with m7GpppG-capped RNA. Component of an alternative nuclear cap-binding complex (CBC) composed of ncbp1/cbp80 and ncbp3.

It is found in the nucleus. The protein resides in the cytoplasm. Its function is as follows. Component of the cap-binding complex (CBC), which binds cotranscriptionally to the 5'-cap of pre-mRNAs and is involved in various processes such as pre-mRNA splicing, translation regulation, nonsense-mediated mRNA decay, RNA-mediated gene silencing (RNAi) by microRNAs (miRNAs) and mRNA export. The CBC complex is involved in mRNA export from the nucleus, leading to the recruitment of the mRNA export machinery to the 5'-end of mRNA and to mRNA export in a 5' to 3' direction through the nuclear pore. The CBC complex is also involved in mediating U snRNA and intronless mRNAs export from the nucleus. The CBC complex is essential for a pioneer round of mRNA translation, before steady state translation when the CBC complex is replaced by cytoplasmic cap-binding protein eIF4E. The pioneer round of mRNA translation mediated by the CBC complex plays a central role in nonsense-mediated mRNA decay (NMD), NMD only taking place in mRNAs bound to the CBC complex, but not on eIF4E-bound mRNAs. The CBC complex enhances NMD in mRNAs containing at least one exon-junction complex (EJC), promoting the interaction between UPF1 and UPF2. The CBC complex is also involved in 'failsafe' NMD, which is independent of the EJC complex, while it does not participate in Staufen-mediated mRNA decay (SMD). During cell proliferation, the CBC complex is also involved in microRNAs (miRNAs) biogenesis via its interaction with SRRT/ARS2 and is required for miRNA-mediated RNA interference. The CBC complex also acts as a negative regulator of parn, thereby acting as an inhibitor of mRNA deadenylation. In the CBC complex, ncbp1/cbp80 does not bind directly capped RNAs (m7GpppG-capped RNA) but is required to stabilize the movement of the N-terminal loop of ncbp2/cbp20 and lock the CBC into a high affinity cap-binding state with the cap structure. Associates with NCBP3 to form an alternative cap-binding complex (CBC) which plays a key role in mRNA export. The conventional CBC with NCBP2 binds both small nuclear RNA (snRNA) and messenger (mRNA) and is involved in their export from the nucleus whereas the alternative CBC with NCBP3 does not bind snRNA and associates only with mRNA thereby playing a role only in mRNA export. The protein is Nuclear cap-binding protein subunit 1 (ncbp1) of Xenopus tropicalis (Western clawed frog).